A 266-amino-acid chain; its full sequence is Small ribosomal subunit protein uS3 (266 aa).

Positions Val39–Arg107 constitute a KH type-2 domain. A disordered region spans residues Pro214–Glu266. Composition is skewed to basic and acidic residues over residues Arg230–Glu241 and Gly257–Glu266.

Belongs to the universal ribosomal protein uS3 family. In terms of assembly, part of the 30S ribosomal subunit. Forms a tight complex with proteins S10 and S14.

In terms of biological role, binds the lower part of the 30S subunit head. Binds mRNA in the 70S ribosome, positioning it for translation. This chain is Small ribosomal subunit protein uS3, found in Burkholderia mallei (strain NCTC 10247).